The primary structure comprises 294 residues: tRNA dimethylallyltransferase (294 aa).

10–17 (GPTAVGKT) contributes to the ATP binding site. 12-17 (TAVGKT) is a binding site for substrate. Residues 35-38 (DSQQ) are interaction with substrate tRNA.

The protein belongs to the IPP transferase family. In terms of assembly, monomer. Mg(2+) serves as cofactor.

It catalyses the reaction adenosine(37) in tRNA + dimethylallyl diphosphate = N(6)-dimethylallyladenosine(37) in tRNA + diphosphate. Catalyzes the transfer of a dimethylallyl group onto the adenine at position 37 in tRNAs that read codons beginning with uridine, leading to the formation of N6-(dimethylallyl)adenosine (i(6)A). The sequence is that of tRNA dimethylallyltransferase from Streptococcus suis (strain 98HAH33).